We begin with the raw amino-acid sequence, 105 residues long: MMQSFENVTVVKKANRYFDDKVTSRTVIFPDGSKKTLGIMLPGSYEFGTDKAEIMEILEGELEVFLPQESKWRTLRGGESFDVPAHSRFSLKVNETVDYCCSYVG.

The protein belongs to the nucleoside phosphorylase PpnP family.

The catalysed reaction is a purine D-ribonucleoside + phosphate = a purine nucleobase + alpha-D-ribose 1-phosphate. It catalyses the reaction adenosine + phosphate = alpha-D-ribose 1-phosphate + adenine. It carries out the reaction cytidine + phosphate = cytosine + alpha-D-ribose 1-phosphate. The enzyme catalyses guanosine + phosphate = alpha-D-ribose 1-phosphate + guanine. The catalysed reaction is inosine + phosphate = alpha-D-ribose 1-phosphate + hypoxanthine. It catalyses the reaction thymidine + phosphate = 2-deoxy-alpha-D-ribose 1-phosphate + thymine. It carries out the reaction uridine + phosphate = alpha-D-ribose 1-phosphate + uracil. The enzyme catalyses xanthosine + phosphate = alpha-D-ribose 1-phosphate + xanthine. Catalyzes the phosphorolysis of diverse nucleosides, yielding D-ribose 1-phosphate and the respective free bases. Can use uridine, adenosine, guanosine, cytidine, thymidine, inosine and xanthosine as substrates. Also catalyzes the reverse reactions. This is Pyrimidine/purine nucleoside phosphorylase from Wolinella succinogenes (strain ATCC 29543 / DSM 1740 / CCUG 13145 / JCM 31913 / LMG 7466 / NCTC 11488 / FDC 602W) (Vibrio succinogenes).